We begin with the raw amino-acid sequence, 532 residues long: MRKLTKMSAMLLASGLILTGCGGNKGLEEKKENKQLTYTTVKDIGDMNPHVYGGSMSAESMIYEPLVRNTKDGIKPLLAKKWDVSEDGKTYTFHLRDDVKFHDGTPFDADAVKKNIDAVQENKKLHSWLKISTLIDNVKVKDKYTVELNLKEAYQPALAELAMPRPYVFVSPKDFKNGTTKDGVKKFDGTGPFKLGEHKKDESADFNKNDQYWGEKSKLNKVQAKVMPAGETAFLSMKKGETNFAFTDDRGTDSLDKDSLKQLKDTGDYQVKRSQPMNTKMLVVNSGKKDNAVSDKTVRQAIGHMVNRDKIAKEILDGQEKPATQLFAKNVTDINFDMPTRKYDLKKAESLLDEAGWKKGKDSDVRQKDGKNLEMAMYYDKGSSSQKEQAEYLQAEFKKMGIKLNINGETSDKIAERRTSGDYDLMFNQTWGLLYDPQSTIAAFKEKNGYESATSGIENKDKIYNSIDDAFKIQNGKERSDAYKNILKQIDDEGIFIPISHGSMTVVAPKDLEKVSFTQSQYELPFNEMQYK.

Positions methionine 1–glycine 20 are cleaved as a signal peptide. The N-palmitoyl cysteine moiety is linked to residue cysteine 21. Residue cysteine 21 is the site of S-diacylglycerol cysteine attachment. Positions 165, 418, and 448 each coordinate staphylopine.

This sequence belongs to the bacterial solute-binding protein 5 family. The complex is composed of two ATP-binding proteins (CntD and CntF), two transmembrane proteins (CntB and CntC) and a solute-binding protein (CntA).

The protein localises to the cell membrane. Its activity is regulated as follows. Nickel/cobalt import is reduced in the presence of zinc. In terms of biological role, part of the ABC transporter complex CntABCDF (Opp1) involved in the uptake of metal in complex with the metallophore staphylopine (StP). Involved in the import of divalent metals ions such as nickel, cobalt and zinc. Binds the metal via the metallophore StP, and transfers the StP-metal complex to the membrane-bound permease. Binds one molecule of StP/metal. Binds StP/Co(2+) and StP/Ni(2+) tighter than StP/Zn(2+). Plays a major role in nickel/cobalt import in zinc-depleted conditions. Contributes to virulence. Required for full urease activity in vitro. This Staphylococcus aureus (strain NCTC 8325 / PS 47) protein is Metal-staphylopine-binding protein CntA.